A 1372-amino-acid polypeptide reads, in one-letter code: DNA-directed RNA polymerase subunit beta (1372 aa).

Belongs to the RNA polymerase beta chain family. The RNAP catalytic core consists of 2 alpha, 1 beta, 1 beta' and 1 omega subunit. When a sigma factor is associated with the core the holoenzyme is formed, which can initiate transcription.

It carries out the reaction RNA(n) + a ribonucleoside 5'-triphosphate = RNA(n+1) + diphosphate. Functionally, DNA-dependent RNA polymerase catalyzes the transcription of DNA into RNA using the four ribonucleoside triphosphates as substrates. The sequence is that of DNA-directed RNA polymerase subunit beta from Bradyrhizobium sp. (strain BTAi1 / ATCC BAA-1182).